The primary structure comprises 116 residues: Small ribosomal subunit protein bS16 (116 aa).

Residues 88–116 (RNNPKAAVPGKRMAELAKKKAERAAASAE) form a disordered region. The span at 99 to 110 (RMAELAKKKAER) shows a compositional bias: basic and acidic residues.

This sequence belongs to the bacterial ribosomal protein bS16 family.

The sequence is that of Small ribosomal subunit protein bS16 from Cereibacter sphaeroides (strain ATCC 17025 / ATH 2.4.3) (Rhodobacter sphaeroides).